Consider the following 100-residue polypeptide: Integration host factor subunit alpha (100 aa).

It belongs to the bacterial histone-like protein family. In terms of assembly, heterodimer of an alpha and a beta chain.

In terms of biological role, this protein is one of the two subunits of integration host factor, a specific DNA-binding protein that functions in genetic recombination as well as in transcriptional and translational control. This chain is Integration host factor subunit alpha, found in Ectopseudomonas mendocina (strain ymp) (Pseudomonas mendocina).